Consider the following 373-residue polypeptide: DNA dC-&gt;dU-editing enzyme APOBEC-3F (373 aa).

CMP/dCMP-type deaminase domains follow at residues 29 to 137 (RRNT…LCRL) and 174 to 321 (DDNY…LRSL). A (Microbial infection) Glycyl lysine isopeptide (Lys-Gly) (interchain with G-Cter in ubiquitin) cross-link involves residue lysine 52. Zn(2+) is bound by residues histidine 65, cysteine 96, and cysteine 99. A (Microbial infection) Glycyl lysine isopeptide (Lys-Gly) (interchain with G-Cter in ubiquitin) cross-link involves residue lysine 234. Residue histidine 249 participates in Zn(2+) binding. The Proton donor role is filled by glutamate 251. Residues cysteine 280 and cysteine 283 each coordinate Zn(2+). A disulfide bridge links cysteine 280 with cysteine 283. (Microbial infection) Glycyl lysine isopeptide (Lys-Gly) (interchain with G-Cter in ubiquitin) cross-links involve residues lysine 334, lysine 352, lysine 355, and lysine 358.

It belongs to the cytidine and deoxycytidylate deaminase family. As to quaternary structure, homodimer. Interacts with APOBEC3G in an RNA-dependent manner. Interacts with AGO1, AGO2 and AGO3. In terms of assembly, (Microbial infection) Interacts with HIV-1 Vif, leading to its ubiquitination and degradation by the proteasome. In the absence of Vif protein, specifically packaged into HIV-1 virions. Zn(2+) is required as a cofactor. Post-translationally, (Microbial infection) Following infection by HIV-1, ubiquitinated by a cullin-5-RING E3 ubiquitin-protein ligase complex (ECS complex) hijacked by the HIV-1 Vif protein, leading to its degradation. As to expression, widely expressed. Highly expressed in ovary.

It is found in the cytoplasm. The protein localises to the P-body. It catalyses the reaction a 2'-deoxycytidine in single-stranded DNA + H2O + H(+) = a 2'-deoxyuridine in single-stranded DNA + NH4(+). With respect to regulation, (Microbial infection) Antiviral activity is neutralized by the HIV-1 virion infectivity factor (Vif), that prevents its incorporation into progeny virions by both inhibiting its translation and/or by inducing its ubiquitination and subsequent degradation by the 26S proteasome. Its function is as follows. DNA deaminase (cytidine deaminase) which acts as an inhibitor of retrovirus replication and retrotransposon mobility via deaminase-dependent and -independent mechanisms. Exhibits antiviral activity against viruse such as HIV-1 or HIV-2. After the penetration of retroviral nucleocapsids into target cells of infection and the initiation of reverse transcription, it can induce the conversion of cytosine to uracil in the minus-sense single-strand viral DNA, leading to G-to-A hypermutations in the subsequent plus-strand viral DNA. The resultant detrimental levels of mutations in the proviral genome, along with a deamination-independent mechanism that works prior to the proviral integration, together exert efficient antiretroviral effects in infected target cells. Selectively targets single-stranded DNA and does not deaminate double-stranded DNA or single- or double-stranded RNA. Exhibits antiviral activity also against hepatitis B virus (HBV), equine infectious anemia virus (EIAV), xenotropic MuLV-related virus (XMRV) and simian foamy virus (SFV) and may inhibit the mobility of LTR and non-LTR retrotransposons. May also play a role in the epigenetic regulation of gene expression through the process of active DNA demethylation. The polypeptide is DNA dC-&gt;dU-editing enzyme APOBEC-3F (Homo sapiens (Human)).